Consider the following 453-residue polypeptide: CCA-adding enzyme (453 aa).

Ser53 and Lys56 together coordinate ATP. Residues Ser53 and Lys56 each coordinate CTP. Mg(2+) is bound by residues Asp65, Asp67, and Asp119. Positions 142, 161, and 170 each coordinate ATP. 3 residues coordinate CTP: His142, Lys161, and Tyr170.

The protein belongs to the tRNA nucleotidyltransferase/poly(A) polymerase family. Archaeal CCA-adding enzyme subfamily. Homodimer. Mg(2+) is required as a cofactor.

The catalysed reaction is a tRNA precursor + 2 CTP + ATP = a tRNA with a 3' CCA end + 3 diphosphate. It carries out the reaction a tRNA with a 3' CCA end + 2 CTP + ATP = a tRNA with a 3' CCACCA end + 3 diphosphate. Catalyzes the addition and repair of the essential 3'-terminal CCA sequence in tRNAs without using a nucleic acid template. Adds these three nucleotides in the order of C, C, and A to the tRNA nucleotide-73, using CTP and ATP as substrates and producing inorganic pyrophosphate. tRNA 3'-terminal CCA addition is required both for tRNA processing and repair. Also involved in tRNA surveillance by mediating tandem CCA addition to generate a CCACCA at the 3' terminus of unstable tRNAs. While stable tRNAs receive only 3'-terminal CCA, unstable tRNAs are marked with CCACCA and rapidly degraded. The sequence is that of CCA-adding enzyme from Pyrococcus furiosus (strain ATCC 43587 / DSM 3638 / JCM 8422 / Vc1).